The primary structure comprises 529 residues: Extracellular signal-regulated kinase 1 (529 aa).

2 disordered regions span residues 1–20 (MEPE…THQS) and 100–131 (QQNQ…SNFN). Residues 8-20 (FQSQMDSDNTHQS) are compositionally biased toward polar residues. Residues 100-117 (QQNQQQQSQQMTQQQLQQ) show a composition bias toward low complexity. Residues 149-439 (YSIVKCIGHG…EALAHPYFQS (291 aa)) form the Protein kinase domain. ATP contacts are provided by residues 155 to 163 (IGHGAYGVV) and lysine 178. Aspartate 275 (proton acceptor) is an active-site residue. Position 309 is a phosphothreonine (threonine 309). Residues 309–311 (TEY) carry the TXY motif. A Phosphotyrosine modification is found at tyrosine 311.

This sequence belongs to the protein kinase superfamily. CMGC Ser/Thr protein kinase family. MAP kinase subfamily. Requires Mg(2+) as cofactor. In terms of processing, dually phosphorylated on Thr-309 and Tyr-311, which activates the enzyme.

The enzyme catalyses L-seryl-[protein] + ATP = O-phospho-L-seryl-[protein] + ADP + H(+). It catalyses the reaction L-threonyl-[protein] + ATP = O-phospho-L-threonyl-[protein] + ADP + H(+). Activated by tyrosine and threonine phosphorylation. In terms of biological role, kinase involved in a signal transduction pathway. In Dictyostelium discoideum (Social amoeba), this protein is Extracellular signal-regulated kinase 1 (erkA).